Here is a 277-residue protein sequence, read N- to C-terminus: Undecaprenyl-diphosphatase (277 aa).

5 helical membrane passes run 85–105 (VNIV…AGAI), 109–129 (LFAP…ILWV), 188–208 (ATEF…VYSV), 218–238 (ADIP…FLCV), and 256–276 (YRIG…VVWA).

Belongs to the UppP family.

The protein localises to the cell inner membrane. It carries out the reaction di-trans,octa-cis-undecaprenyl diphosphate + H2O = di-trans,octa-cis-undecaprenyl phosphate + phosphate + H(+). Functionally, catalyzes the dephosphorylation of undecaprenyl diphosphate (UPP). Confers resistance to bacitracin. In Herminiimonas arsenicoxydans, this protein is Undecaprenyl-diphosphatase.